Here is a 122-residue protein sequence, read N- to C-terminus: UPF0102 protein CTC_01256 (122 aa).

The protein belongs to the UPF0102 family.

The sequence is that of UPF0102 protein CTC_01256 from Clostridium tetani (strain Massachusetts / E88).